The sequence spans 408 residues: Phosphoenolpyruvate/phosphate translocator 1, chloroplastic (408 aa).

The transit peptide at 1–66 (MQSAAAVGLL…ISARRIGLVP (66 aa)) directs the protein to the chloroplast. 7 helical membrane-spanning segments follow: residues 105–125 (TLQLGALFGLWYLFNIYFNIY), 139–159 (ITNVQFAVGTVIALFMWITGI), 165–185 (ISGAQLAAILPLAMVHTMGNL), 222–242 (PTPFVVLSLVPIVGGVALASL), 245–262 (ASFNWAGFWSAMASNVTF), 283–303 (ITLFSIITVMSFFLLAPVTLL), and 375–395 (TPVSPINSLGTGVALAGVFLY). Residues 124–241 (IYNKQVLKVF…PIVGGVALAS (118 aa)) form the EamA domain.

The protein belongs to the TPT transporter family. PPT (TC 2.A.7.9) subfamily.

Its subcellular location is the plastid. It localises to the chloroplast membrane. Its function is as follows. Phosphoenolpyruvate/phosphate translocator that transports phosphoenolpyruvate (PEP) and dihydroxyacetone phosphate. This Oryza sativa subsp. japonica (Rice) protein is Phosphoenolpyruvate/phosphate translocator 1, chloroplastic (PPT1).